The sequence spans 122 residues: MIQQESRLKVADNSGAREVLVIKVLGGSGRRYANIGDVVVATVKDATPGGVVKKGQVVKAVVVRTKRGVRRSDGSYIRFDENACVIIRDDKSPRGTRIFGPVARELRDKDFMKIISLAPEVI.

This sequence belongs to the universal ribosomal protein uL14 family. In terms of assembly, part of the 50S ribosomal subunit. Forms a cluster with proteins L3 and L19. In the 70S ribosome, L14 and L19 interact and together make contacts with the 16S rRNA in bridges B5 and B8.

In terms of biological role, binds to 23S rRNA. Forms part of two intersubunit bridges in the 70S ribosome. The sequence is that of Large ribosomal subunit protein uL14 from Geobacillus thermodenitrificans (strain NG80-2).